The following is a 429-amino-acid chain: MIDPTLLRNNLSEIAEKLKVRRGFILDVNKFSQLEEQRKTLQIKTETLQAERNSRSKTIGAAKARGEDISTLLAEVDHMGAELNTVKEELANVLTEIEQLALTIPNIPADEVPLGKDDSDNKEVFRWGTPKKFDFEVKDHVALGEILGGLDFAAGVKLSGARFAVIKGQIARMHRALAQFMLDLHTEQHGYTEAYVPYLVNHATLYGTGQLPKFGEELFHIKPLENEQTYALIPTAEVPVTNLVRDEIIDEADLPIKMTAHTPCFRSEAGSYGRDTRGLIRMHQFDKVELVQIVEPEKSMEALEELTNQAEKVLQLLNLPYRKVLLCTGDMGFGATKTYDLEVWIPAQNTYREISSCSNMWDFQARRMQARCRAKGDKKTRLVHTLNGSGLAVGRTLVAILENYQNADGSITVPEVLRPYMNGIEIIGK.

Residue 235-237 (TAE) participates in L-serine binding. 266-268 (RSE) provides a ligand contact to ATP. Glu-289 is an L-serine binding site. 353 to 356 (EISS) serves as a coordination point for ATP. Position 389 (Ser-389) interacts with L-serine.

Belongs to the class-II aminoacyl-tRNA synthetase family. Type-1 seryl-tRNA synthetase subfamily. In terms of assembly, homodimer. The tRNA molecule binds across the dimer.

The protein resides in the cytoplasm. It catalyses the reaction tRNA(Ser) + L-serine + ATP = L-seryl-tRNA(Ser) + AMP + diphosphate + H(+). The enzyme catalyses tRNA(Sec) + L-serine + ATP = L-seryl-tRNA(Sec) + AMP + diphosphate + H(+). The protein operates within aminoacyl-tRNA biosynthesis; selenocysteinyl-tRNA(Sec) biosynthesis; L-seryl-tRNA(Sec) from L-serine and tRNA(Sec): step 1/1. Functionally, catalyzes the attachment of serine to tRNA(Ser). Is also able to aminoacylate tRNA(Sec) with serine, to form the misacylated tRNA L-seryl-tRNA(Sec), which will be further converted into selenocysteinyl-tRNA(Sec). This Histophilus somni (strain 129Pt) (Haemophilus somnus) protein is Serine--tRNA ligase.